A 439-amino-acid polypeptide reads, in one-letter code: Eukaryotic translation initiation factor 2 subunit gamma (439 aa).

The region spanning 11–215 is the tr-type G domain; it reads QATLNIGTIG…FIVNYIPEPV (205 aa). The tract at residues 20-27 is G1; sequence GHVAHGKS. 23–28 is a GTP binding site; sequence AHGKST. Residues 48–52 form a G2 region; that stretch reads NITIK. The G3 stretch occupies residues 103 to 106; the sequence is DCPG. GTP contacts are provided by residues 159–162 and 193–195; these read NKID and AAQ. The G4 stretch occupies residues 159 to 162; that stretch reads NKID. Positions 193–195 are G5; the sequence is AAQ. The interval 415–427 is interacts with CDC123; that stretch reads GEIKDGTCIEPEY.

The protein belongs to the TRAFAC class translation factor GTPase superfamily. Classic translation factor GTPase family. EIF2G subfamily. In terms of assembly, eukaryotic translation initiation factor 2 eIF2 is a heterotrimeric complex composed of an alpha, a beta and a gamma subunit. The factors eIF-1, eIF-2, eIF-3, TIF5/eIF-5 and methionyl-tRNAi form a multifactor complex (MFC) that may bind to the 40S ribosome.

The protein resides in the cytoplasm. Its subcellular location is the cytosol. The catalysed reaction is GTP + H2O = GDP + phosphate + H(+). Its function is as follows. As a subunit of eukaryotic initiation factor 2 eIF2, involved in the early steps of protein synthesis. In the presence of GTP, eIF-2 forms a ternary complex with initiator tRNA Met-tRNAi and then recruits the 40S ribosomal complex and initiation factors eIF-1, eIF-1A and eIF-3 to form the 43S pre-initiation complex (43S PIC), a step that determines the rate of protein translation. The 43S PIC binds to mRNA and scans downstream to the initiation codon, where it forms a 48S initiation complex by codon-anticodon base pairing. This leads to the displacement of eIF-1 to allow GTPase-activating protein (GAP) eIF-5-mediated hydrolysis of eIF2-bound GTP. Hydrolysis of GTP and release of Pi, which makes GTP hydrolysis irreversible, causes the release of the eIF-2-GDP binary complex from the 40S subunit, an event that is essential for the subsequent joining of the 60S ribosomal subunit to form an elongation-competent 80S ribosome. In order for eIF-2 to recycle and catalyze another round of initiation, the GDP bound to eIF-2 must be exchanged with GTP by way of a reaction catalyzed by GDP-GTP exchange factor (GEF) eIF-2B. This Encephalitozoon cuniculi (strain GB-M1) (Microsporidian parasite) protein is Eukaryotic translation initiation factor 2 subunit gamma.